The sequence spans 529 residues: Cytochrome P450 monooxygenase CLM2 (529 aa).

A helical transmembrane segment spans residues 2 to 19 (LLIIVVLVGTLIYFLSFH). N-linked (GlcNAc...) asparagine glycans are attached at residues N244 and N281. Position 438 (C438) interacts with heme.

It belongs to the cytochrome P450 family. It depends on heme as a cofactor.

It is found in the membrane. The catalysed reaction is (-)-longiborneol + reduced [NADPH--hemoprotein reductase] + O2 = culmorin + oxidized [NADPH--hemoprotein reductase] + H2O + H(+). The protein operates within mycotoxin biosynthesis. In terms of biological role, cytochrome P450 monooxygenase involved in the biosynthesis of culmorin, a tricyclic sesquiterpene diol reported to have antifungal activity and some phytotoxicity to wheat coleoptile tissue, contributing to Fusarium head blight disease. The terpene cyclase CLM1 is responsible for the cyclization of farnesyl diphosphate into the intermediate longiborneol. Longiborneol is then hydroxylated in a regio- and endo-stereoselective manner at position C-11 by the cytochrome P450 monooxygenase CLM2 to produce culmorin. Additional non-specific oxygenases are also able to hydroxylate longiborneol at other sites than C-11 leading to 3-hydroxylongiborneol, 5-hydroxylongiborneol, 12-hydroxylongiborneol and 15-hydroxylongiborneol. Moreover, another oxygenase capable of installing a C-11 exo-hydroxy group in longiborneol can also yield 11-epi-acetylculmorin. The production of these longiborneol derivatives is dwarfed by the high abundance of culmorin, suggesting that CLM2 displays superior enzymatic activity to the unidentified, possibly promiscuous, additional oxygenases. The polypeptide is Cytochrome P450 monooxygenase CLM2 (Gibberella zeae (strain ATCC MYA-4620 / CBS 123657 / FGSC 9075 / NRRL 31084 / PH-1) (Wheat head blight fungus)).